The primary structure comprises 428 residues: Enolase (428 aa).

Gln-163 provides a ligand contact to (2R)-2-phosphoglycerate. Glu-205 functions as the Proton donor in the catalytic mechanism. Residues Asp-242, Glu-286, and Asp-313 each contribute to the Mg(2+) site. The (2R)-2-phosphoglycerate site is built by Lys-338, Arg-367, Ser-368, and Lys-389. Catalysis depends on Lys-338, which acts as the Proton acceptor.

The protein belongs to the enolase family. The cofactor is Mg(2+).

Its subcellular location is the cytoplasm. It is found in the secreted. It localises to the cell surface. The enzyme catalyses (2R)-2-phosphoglycerate = phosphoenolpyruvate + H2O. The protein operates within carbohydrate degradation; glycolysis; pyruvate from D-glyceraldehyde 3-phosphate: step 4/5. In terms of biological role, catalyzes the reversible conversion of 2-phosphoglycerate (2-PG) into phosphoenolpyruvate (PEP). It is essential for the degradation of carbohydrates via glycolysis. The protein is Enolase of Bordetella avium (strain 197N).